Reading from the N-terminus, the 231-residue chain is 7-cyano-7-deazaguanine synthase (231 aa).

Residue 8 to 18 coordinates ATP; sequence FSGGQDSTTCL. Zn(2+) is bound by residues cysteine 188, cysteine 197, cysteine 200, and cysteine 203.

Belongs to the QueC family. Zn(2+) serves as cofactor.

It catalyses the reaction 7-carboxy-7-deazaguanine + NH4(+) + ATP = 7-cyano-7-deazaguanine + ADP + phosphate + H2O + H(+). It functions in the pathway purine metabolism; 7-cyano-7-deazaguanine biosynthesis. Functionally, catalyzes the ATP-dependent conversion of 7-carboxy-7-deazaguanine (CDG) to 7-cyano-7-deazaguanine (preQ(0)). This is 7-cyano-7-deazaguanine synthase from Sodalis glossinidius (strain morsitans).